Reading from the N-terminus, the 349-residue chain is Protein RecA (349 aa).

65–72 (GPESSGKT) contributes to the ATP binding site.

Belongs to the RecA family.

Its subcellular location is the cytoplasm. Can catalyze the hydrolysis of ATP in the presence of single-stranded DNA, the ATP-dependent uptake of single-stranded DNA by duplex DNA, and the ATP-dependent hybridization of homologous single-stranded DNAs. It interacts with LexA causing its activation and leading to its autocatalytic cleavage. This is Protein RecA from Clostridium acetobutylicum (strain ATCC 824 / DSM 792 / JCM 1419 / IAM 19013 / LMG 5710 / NBRC 13948 / NRRL B-527 / VKM B-1787 / 2291 / W).